The sequence spans 117 residues: Glycine cleavage system H-like protein (117 aa).

The Lipoyl-binding domain maps to 21–103 (IVRLGLSSRM…ESEGWFVVLQ (83 aa)). K62 is modified (N6-lipoyllysine).

The protein belongs to the GcvH family. (R)-lipoate serves as cofactor.

This Chlamydia muridarum (strain MoPn / Nigg) protein is Glycine cleavage system H-like protein.